We begin with the raw amino-acid sequence, 108 residues long: Parvalbumin beta (108 aa).

2 consecutive EF-hand domains span residues 38–73 (KPTD…FCSS) and 77–108 (LSNA…LVRS). Asp-51, Asp-53, Ser-55, Tyr-57, Glu-59, Glu-62, Asp-90, Asp-92, Asp-94, Lys-96, and Glu-101 together coordinate Ca(2+).

It belongs to the parvalbumin family.

In muscle, parvalbumin is thought to be involved in relaxation after contraction. It binds two calcium ions. This chain is Parvalbumin beta, found in Amphiuma means (Salamander).